The primary structure comprises 287 residues: Ribosomal RNA small subunit methyltransferase A (287 aa).

S-adenosyl-L-methionine contacts are provided by Asn-28, Leu-30, Gly-55, Glu-76, Asp-101, and Asn-125.

This sequence belongs to the class I-like SAM-binding methyltransferase superfamily. rRNA adenine N(6)-methyltransferase family. RsmA subfamily.

The protein resides in the cytoplasm. It carries out the reaction adenosine(1518)/adenosine(1519) in 16S rRNA + 4 S-adenosyl-L-methionine = N(6)-dimethyladenosine(1518)/N(6)-dimethyladenosine(1519) in 16S rRNA + 4 S-adenosyl-L-homocysteine + 4 H(+). Functionally, specifically dimethylates two adjacent adenosines (A1518 and A1519) in the loop of a conserved hairpin near the 3'-end of 16S rRNA in the 30S particle. May play a critical role in biogenesis of 30S subunits. The chain is Ribosomal RNA small subunit methyltransferase A from Alkaliphilus metalliredigens (strain QYMF).